A 1030-amino-acid chain; its full sequence is Calcium-transporting ATPase 4, plasma membrane-type (1030 aa).

The Cytoplasmic portion of the chain corresponds to methionine 1–serine 157. Residues alanine 19–valine 30 are interaction with calmodulin. Phosphoserine is present on serine 28. The chain crosses the membrane as a helical span at residues phenylalanine 158–alanine 178. Residues valine 179–tyrosine 196 are Lumenal-facing. The helical transmembrane segment at aspartate 197 to tyrosine 217 threads the bilayer. Topologically, residues lysine 218–leucine 345 are cytoplasmic. The chain crosses the membrane as a helical span at residues asparagine 346–valine 365. The Lumenal segment spans residues valine 366–tyrosine 395. A helical membrane pass occupies residues phenylalanine 396 to leucine 413. The Cytoplasmic segment spans residues alanine 414–isoleucine 804. Aspartate 451 (4-aspartylphosphate intermediate) is an active-site residue. The Mg(2+) site is built by aspartate 749 and aspartate 753. Residues glutamine 805–phenylalanine 823 traverse the membrane as a helical segment. The Lumenal segment spans residues valine 824–leucine 834. Residues threonine 835–alanine 855 form a helical membrane-spanning segment. The Cytoplasmic portion of the chain corresponds to threonine 856 to phenylalanine 875. Residues isoleucine 876 to leucine 898 form a helical membrane-spanning segment. Over asparagine 899–glycine 910 the chain is Lumenal. Residues proline 911–asparagine 932 traverse the membrane as a helical segment. Residues glutamate 933–asparagine 950 are Cytoplasmic-facing. Residues serine 951–leucine 972 form a helical membrane-spanning segment. The Lumenal segment spans residues glycine 973–serine 982. The chain crosses the membrane as a helical span at residues tryptophan 983–lysine 1004. Residues cysteine 1005 to alanine 1030 lie on the Cytoplasmic side of the membrane.

This sequence belongs to the cation transport ATPase (P-type) (TC 3.A.3) family. Type IIB subfamily.

It is found in the vacuole membrane. The enzyme catalyses Ca(2+)(in) + ATP + H2O = Ca(2+)(out) + ADP + phosphate + H(+). Its activity is regulated as follows. Activated by calmodulin. Its function is as follows. This magnesium-dependent enzyme catalyzes the hydrolysis of ATP coupled with the translocation of calcium from the cytosol into small vacuoles. The polypeptide is Calcium-transporting ATPase 4, plasma membrane-type (ACA4) (Arabidopsis thaliana (Mouse-ear cress)).